The chain runs to 420 residues: MLRRDMNIADYDPELWQAIQGENRRQEEHIELIASENYASPRVMEAQGSQFTNKYAEGYPGKRYYGGCEYADIVEQLAIERAKELFGADYANVQPHSGSQANAAVYGALLMPGDTILGMSLAHGGHLTHGASVSFSGKVYHAEQYGITAEGVIDYDALRKQAHEVKPKMIVGGFSAYSQIVDWAKMREIADEVGAYLFVDMAHVAGLIAAGVYPSPLPHAHVVTTTTHKTLAGPRGGLILSNAKDEEIYKKLQNAVFPREQGGPLVHIIAAKAVCFKEALEPEYKVYQQQVVKNAKAMVEVFKQRGYNVVSNGTENHLFLVDLVSHGLTGKAADAALGKANITVNKNAVPNDPQKPFITSGIRVGTPSVTRRGFKEAEVRELAGWMCDVLDNIGKDNEAAVIEATKVKVLDICKRLPVYP.

(6S)-5,6,7,8-tetrahydrofolate is bound by residues L121 and 125-127 (GHL). Position 229 is an N6-(pyridoxal phosphate)lysine (K229).

This sequence belongs to the SHMT family. In terms of assembly, homodimer. Requires pyridoxal 5'-phosphate as cofactor.

The protein localises to the cytoplasm. The catalysed reaction is (6R)-5,10-methylene-5,6,7,8-tetrahydrofolate + glycine + H2O = (6S)-5,6,7,8-tetrahydrofolate + L-serine. It participates in one-carbon metabolism; tetrahydrofolate interconversion. Its pathway is amino-acid biosynthesis; glycine biosynthesis; glycine from L-serine: step 1/1. In terms of biological role, catalyzes the reversible interconversion of serine and glycine with tetrahydrofolate (THF) serving as the one-carbon carrier. This reaction serves as the major source of one-carbon groups required for the biosynthesis of purines, thymidylate, methionine, and other important biomolecules. Also exhibits THF-independent aldolase activity toward beta-hydroxyamino acids, producing glycine and aldehydes, via a retro-aldol mechanism. The sequence is that of Serine hydroxymethyltransferase from Glaesserella parasuis serovar 5 (strain SH0165) (Haemophilus parasuis).